A 328-amino-acid chain; its full sequence is Carbonic anhydrase, chloroplastic (328 aa).

The span at 1–15 shows a compositional bias: low complexity; sequence MSTSSINGFSLSSLS. A disordered region spans residues 1-26; the sequence is MSTSSINGFSLSSLSPAKTSTKRTTL. Residues 1–70 constitute a chloroplast transit peptide; sequence MSTSSINGFS…IITPVLREEM (70 aa).

It belongs to the beta-class carbonic anhydrase family. In terms of assembly, homohexamer.

It localises to the plastid. It is found in the chloroplast stroma. It carries out the reaction hydrogencarbonate + H(+) = CO2 + H2O. Functionally, reversible hydration of carbon dioxide. The protein is Carbonic anhydrase, chloroplastic of Pisum sativum (Garden pea).